The chain runs to 448 residues: Senescence/dehydration-associated protein At4g35985, chloroplastic (448 aa).

The disordered stretch occupies residues 1–36; it reads MECSATPPKLYPTVDTSTTVAPLPKSSSSSSSTNNN. Residues 1-56 constitute a chloroplast transit peptide; it reads MECSATPPKLYPTVDTSTTVAPLPKSSSSSSSTNNNNLYPSINVNDLVNNIFPDPT. Residues 26 to 36 show a composition bias toward low complexity; that stretch reads SSSSSSSTNNN. The Senescence domain maps to 248-416; the sequence is IAAGSGQLIK…AWTVFKIRQA (169 aa). Residues 422–448 are disordered; sequence AMKPSSLAKTVVKTAAKERKKGKKSSK. Positions 439 to 448 are enriched in basic residues; it reads ERKKGKKSSK.

In terms of tissue distribution, expressed in leaves (especially in midribs and trichomes), apical meristemic regions, stems, roots and flowers.

It localises to the plastid. Its subcellular location is the chloroplast. This is Senescence/dehydration-associated protein At4g35985, chloroplastic from Arabidopsis thaliana (Mouse-ear cress).